The sequence spans 307 residues: MTVEGETPKRCPECNSEHLIRDYEHGELICADCGAVIEDAYIDQGPEWRAFDSDQDERRARTGSPMTYLSHDKGLATEISWSNKDYYGKRIPHKNRAQIYRVRKWHQRIRVSNAAERNLSLALQLLNDIGAKLGIPKDIKETAALIYRKAVEKNLIRGRSIESIVCASIYAACRKVNIPRTLDEISKASEVNKKKIGKAYRHLAKELDLNLKPTTPFSYISQFCNKLDLDKQAIVISEDIVRQAMSMGISSGKGPTGIAAAAIYIASVKVGKPRTQKEIARISGVTEVTIRNRYKEISKALNISISE.

The TFIIB-type zinc-finger motif lies at 7-38 (TPKRCPECNSEHLIRDYEHGELICADCGAVIE). Residues Cys11, Cys14, Cys30, and Cys33 each coordinate Zn(2+). 2 tandem repeats follow at residues 124 to 207 (QLLN…AKEL) and 218 to 299 (SYIS…EISK).

It belongs to the TFIIB family.

In terms of biological role, stabilizes TBP binding to an archaeal box-A promoter. Also responsible for recruiting RNA polymerase II to the pre-initiation complex (DNA-TBP-TFIIB). The protein is Transcription initiation factor IIB 2 of Thermoplasma acidophilum (strain ATCC 25905 / DSM 1728 / JCM 9062 / NBRC 15155 / AMRC-C165).